The chain runs to 185 residues: Vomeronasal secretory protein 2 (185 aa).

A signal peptide spans 1–19 (MKSLLLTVTLSSLVATLQT). Cysteine 80 and cysteine 172 are joined by a disulfide.

The protein belongs to the calycin superfamily. Lipocalin family. As to expression, specifically expressed in vomeronasal and posterior glands of the nasal septum, the ducts of which open into the lumen of the vomeronasal organ.

It is found in the secreted. In terms of biological role, transport of lipophilic molecules, possible pheromone-carrier. The sequence is that of Vomeronasal secretory protein 2 (Lcn4) from Mus musculus (Mouse).